A 913-amino-acid chain; its full sequence is Valine--tRNA ligase (913 aa).

The 'HIGH' region motif lies at 48–58 (PNVTGSLHMGH). Residues 541-545 (KMSKS) carry the 'KMSKS' region motif. Lys-544 contacts ATP. Residues 839 to 907 (VVDLEALVSK…IEHRLQSLGV (69 aa)) are a coiled coil.

The protein belongs to the class-I aminoacyl-tRNA synthetase family. ValS type 1 subfamily. In terms of assembly, monomer.

Its subcellular location is the cytoplasm. It carries out the reaction tRNA(Val) + L-valine + ATP = L-valyl-tRNA(Val) + AMP + diphosphate. Catalyzes the attachment of valine to tRNA(Val). As ValRS can inadvertently accommodate and process structurally similar amino acids such as threonine, to avoid such errors, it has a 'posttransfer' editing activity that hydrolyzes mischarged Thr-tRNA(Val) in a tRNA-dependent manner. This Thermosynechococcus vestitus (strain NIES-2133 / IAM M-273 / BP-1) protein is Valine--tRNA ligase.